Consider the following 107-residue polypeptide: Transcription initiation factor IIA subunit 2-2 (107 aa).

Belongs to the TFIIA subunit 2 family. TFIIA is a heterodimer of the large unprocessed subunit 1 and a small subunit gamma. It was originally believed to be a heterotrimer of an alpha (p30), a beta (p20) and a gamma (p14) subunit.

Its subcellular location is the nucleus. TFIIA is a component of the transcription machinery of RNA polymerase II and plays an important role in transcriptional activation. TFIIA in a complex with TBP mediates transcriptional activity. The sequence is that of Transcription initiation factor IIA subunit 2-2 (TfIIA-S-2) from Drosophila melanogaster (Fruit fly).